Consider the following 107-residue polypeptide: Anti-adapter protein IraM (107 aa).

The protein belongs to the IraM/RssC family.

The protein resides in the cytoplasm. Functionally, inhibits RpoS proteolysis by regulating RssB activity, thereby increasing the stability of the sigma stress factor RpoS during magnesium starvation. This is Anti-adapter protein IraM from Escherichia coli O7:K1 (strain IAI39 / ExPEC).